The sequence spans 236 residues: Ribitol-5-phosphate cytidylyltransferase (236 aa).

Residues 7–10 and 80–86 contribute to the CTP site; these read LAGG and GTDRNET.

This sequence belongs to the IspD/TarI cytidylyltransferase family. TarI subfamily.

It carries out the reaction D-ribitol 5-phosphate + CTP + H(+) = CDP-L-ribitol + diphosphate. It participates in cell wall biogenesis; poly(ribitol phosphate) teichoic acid biosynthesis. In terms of biological role, catalyzes the transfer of the cytidylyl group of CTP to D-ribitol 5-phosphate. The polypeptide is Ribitol-5-phosphate cytidylyltransferase (Listeria monocytogenes serovar 1/2a (strain ATCC BAA-679 / EGD-e)).